Reading from the N-terminus, the 155-residue chain is Ribosome maturation factor RimP (155 aa).

It belongs to the RimP family.

Its subcellular location is the cytoplasm. Functionally, required for maturation of 30S ribosomal subunits. In Phocaeicola vulgatus (strain ATCC 8482 / DSM 1447 / JCM 5826 / CCUG 4940 / NBRC 14291 / NCTC 11154) (Bacteroides vulgatus), this protein is Ribosome maturation factor RimP.